The following is a 113-amino-acid chain: Hydrogenase maturation factor HypA (113 aa).

His2 contacts Ni(2+). 4 residues coordinate Zn(2+): Cys73, Cys76, Cys89, and Cys92.

It belongs to the HypA/HybF family.

Its function is as follows. Involved in the maturation of [NiFe] hydrogenases. Required for nickel insertion into the metal center of the hydrogenase. The polypeptide is Hydrogenase maturation factor HypA (Chlorobaculum tepidum (strain ATCC 49652 / DSM 12025 / NBRC 103806 / TLS) (Chlorobium tepidum)).